The following is a 316-amino-acid chain: Polyprenyl transferase ausN (316 aa).

9 consecutive transmembrane segments (helical) span residues 45–65 (VVGVAYTAAISPVTLPATFLL), 69–89 (VILSLWGFCIRSAGCAWNDLI), 108–128 (GAVSPSGAALLTAFMFGCGGS), 129–149 (LLLLLPSQCAFEAAIVVFFAL), 163–183 (LILTNIAWAIPMAMSSLDMNP), 188–208 (IPTLAMSFSIASVIVMIDIVY), 233–253 (DQIAYSLFFSGTLSLLAGGIL), 256–276 (LGIPFLIFSVGGHFVGFLRFL), and 296–316 (SCLLATVFLVFGLFFEYCVRL).

The protein belongs to the UbiA prenyltransferase family. Mg(2+) serves as cofactor.

The protein resides in the membrane. The catalysed reaction is 3,5-dimethylorsellinate + (2E,6E)-farnesyl diphosphate = (3R)-3-farnesyl-6-hydroxy-2,3,5-trimethyl-4-oxocyclohexa-1,5-diene-1-carboxylate + diphosphate + H(+). Its pathway is secondary metabolite biosynthesis; terpenoid biosynthesis. Functionally, polyprenyl transferase; part of the gene cluster A that mediates the biosynthesis of the fungal meroterpenoid acetoxydehydroaustin. The first step of the pathway is the synthesis of 3,5-dimethylorsellinic acid by the polyketide synthase ausA. 3,5-dimethylorsellinic acid is then prenylated by the polyprenyl transferase ausN. Further epoxidation by the FAD-dependent monooxygenase ausM and cyclization by the probable terpene cyclase ausL lead to the formation of protoaustinoid A. Protoaustinoid A is then oxidized to spiro-lactone preaustinoid A3 by the combined action of the FAD-binding monooxygenases ausB and ausC, and the dioxygenase ausE. Acid-catalyzed keto-rearrangement and ring contraction of the tetraketide portion of preaustinoid A3 by ausJ lead to the formation of preaustinoid A4. The aldo-keto reductase ausK, with the help of ausH, is involved in the next step by transforming preaustinoid A4 into isoaustinone which is in turn hydroxylated by the P450 monooxygenase ausI to form austinolide. The cytochrome P450 monooxygenase ausG then modifies austinolide to austinol. Austinol is further acetylated to austin by the O-acetyltransferase ausP, which spontaneously changes to dehydroaustin. The cytochrome P450 monooxygenase then converts dehydroaustin is into 7-dehydrodehydroaustin. The hydroxylation catalyzed by ausR permits the second O-acetyltransferase ausQ to add an additional acetyl group to the molecule, leading to the formation of acetoxydehydroaustin. Due to genetic rearrangements of the clusters and the subsequent loss of some enzymes, the end product of the Penicillium brasilianum austinoid biosynthesis clusters is acetoxydehydroaustin. The protein is Polyprenyl transferase ausN of Penicillium brasilianum.